Here is a 218-residue protein sequence, read N- to C-terminus: Small ribosomal subunit protein uS3c (218 aa).

The region spanning 47–118 is the KH type-2 domain; that stretch reads VQNNIRISSG…KLNIAITRIS (72 aa).

Belongs to the universal ribosomal protein uS3 family. Part of the 30S ribosomal subunit.

The protein resides in the plastid. It is found in the chloroplast. The protein is Small ribosomal subunit protein uS3c (rps3) of Draba nemorosa (Woodland whitlowgrass).